Consider the following 146-residue polypeptide: Transcriptional regulator MraZ (146 aa).

SpoVT-AbrB domains follow at residues 5-52 and 81-124; these read SAAL…PRAE and AAEI…KEES.

This sequence belongs to the MraZ family. In terms of assembly, forms oligomers.

It localises to the cytoplasm. It is found in the nucleoid. The polypeptide is Transcriptional regulator MraZ (Alcanivorax borkumensis (strain ATCC 700651 / DSM 11573 / NCIMB 13689 / SK2)).